Reading from the N-terminus, the 190-residue chain is DNA-invertase (190 aa).

Residues 2–135 (ATIGYIRVST…AGLAAARAQG (134 aa)) form the Resolvase/invertase-type recombinase catalytic domain. S10 (O-(5'-phospho-DNA)-serine intermediate) is an active-site residue. Residues 162-181 (RQQLAIIFGIGVSTLYRYFP) constitute a DNA-binding region (H-T-H motif).

The protein belongs to the site-specific recombinase resolvase family.

A DNA fragment of approximately 900 base pairs, adjacent to the fljB (H2) gene, which specifies the synthesis of phase-2 flagellin, can exist in either orientation with respect to fljB. The orientation of the inversion region controls expression of fljB. The hin gene occupies about two-thirds of the inversion region; it is required for the inversion of the fljB controlling region. This Salmonella abortus-equi protein is DNA-invertase (hin).